Here is a 442-residue protein sequence, read N- to C-terminus: NAD kinase 2, mitochondrial (442 aa).

Residues 1 to 62 constitute a mitochondrion transit peptide; that stretch reads MTCYRGFLLG…RELAGCGSRA (62 aa). The span at 24–36 shows a compositional bias: low complexity; sequence RGPGAGGPAARPR. Residues 24-60 are disordered; that stretch reads RGPGAGGPAARPRLGGDGGGRRHLGQGQPRELAGCGS. The residue at position 76 (K76) is an N6-acetyllysine; alternate. K76 carries the N6-succinyllysine; alternate modification. Position 188 is a phosphoserine (S188). Position 302 is an N6-succinyllysine (K302). N6-acetyllysine; alternate is present on K317. An N6-succinyllysine; alternate modification is found at K317. At S367 the chain carries Phosphoserine. N6-acetyllysine is present on K397.

This sequence belongs to the NAD kinase family. Homodimer. In terms of tissue distribution, widely expressed.

Its subcellular location is the mitochondrion. The catalysed reaction is NAD(+) + ATP = ADP + NADP(+) + H(+). Inhibited by NADH, NADPH and NADP(+). In terms of biological role, mitochondrial NAD(+) kinase that phosphorylates NAD(+) to yield NADP(+). Can use both ATP or inorganic polyphosphate as the phosphoryl donor. Also has weak NADH kinase activity in vitro; however NADH kinase activity is much weaker than the NAD(+) kinase activity and may not be relevant in vivo. In Homo sapiens (Human), this protein is NAD kinase 2, mitochondrial (NADK2).